The following is a 1406-amino-acid chain: EF-hand calcium-binding domain-containing protein 5 (1406 aa).

Positions 255-655 are disordered; it reads NKDLPQQQRD…KACEPKPQHV (401 aa). Composition is skewed to polar residues over residues 258-294, 322-334, 342-354, 362-373, 382-393, 402-414, 422-434, and 442-464; these read LPQQ…SLTG, RRSS…QQRG, RRSSTVEQTRQR, RRSSTVEQTQRR, and RRSS…SLPE. The span at 465 to 477 shows a compositional bias: basic and acidic residues; it reads QESHRGSITEGSH. The segment covering 501–513 has biased composition (low complexity); that stretch reads DDSGSAGSRRGSG. Residues 564–577 are compositionally biased toward acidic residues; that stretch reads QELDEDSTPQLEDD. Composition is skewed to basic and acidic residues over residues 578–598 and 638–655; these read SALK…EEKP and SKRD…PQHV. The EF-hand domain maps to 773–808; that stretch reads RRRILLQAIFEKWDNDGSGFLDLNEVDDLLYTYKEG. 4 residues coordinate Ca(2+): Asp-786, Asp-788, Ser-790, and Glu-797.

The chain is EF-hand calcium-binding domain-containing protein 5 (Efcab5) from Mus musculus (Mouse).